The primary structure comprises 578 residues: Octopamine receptor 2 (578 aa).

Over 1–84 the chain is Extracellular; the sequence is MMSFPIALFA…YDSITIFITV (84 aa). N-linked (GlcNAc...) asparagine glycans are attached at residues Asn13, Asn38, Asn46, and Asn59. The chain crosses the membrane as a helical span at residues 85-107; the sequence is AVVLTLITLWTILGNFFVLMALY. Over 108–117 the chain is Cytoplasmic; sequence RYGTLRTMSN. A helical membrane pass occupies residues 118–139; sequence CLIGNLAISDLLLAVTVLPIST. The Extracellular segment spans residues 140 to 156; it reads VHDLLGYWVFGEFTCTL. A disulfide bridge links Cys154 with Cys239. Residues 157–177 traverse the membrane as a helical segment; sequence WLCMDVLYCTASIWGLCTVAF. Residues 178–197 lie on the Cytoplasmic side of the membrane; that stretch reads DRYLATVYPVWYHDQRSVRK. Residues 198–220 traverse the membrane as a helical segment; the sequence is AVGCIVFVWIFSIVISFAPFIGW. The Extracellular portion of the chain corresponds to 221–251; that stretch reads QHMIPSFFSFNASIQRYQCILFTSSSYVLYS. An N-linked (GlcNAc...) asparagine glycan is attached at Asn231. The helical transmembrane segment at 252 to 272 threads the bilayer; sequence SMGSFVIPAILMAFMYVRIFV. At 273–495 the chain is on the cytoplasmic side; the sequence is VLHNQSRGVK…ELREQRATKR (223 aa). The helical transmembrane segment at 496 to 517 threads the bilayer; it reads MLLIMACFCVCWMPFLFMYILR. Over 518-531 the chain is Extracellular; it reads SVCDTCHMNQHFVA. A helical transmembrane segment spans residues 532 to 553; sequence AIIWLGYVNSSLNPVLYTLFND. Residues 554–578 lie on the Cytoplasmic side of the membrane; sequence DFKVAFKRLIGARSPSAYRSPGPRR.

The protein belongs to the G-protein coupled receptor 1 family.

It localises to the cell membrane. In terms of biological role, receptor for octopamine. Octopamine (OA) is a neurotransmitter, neurohormone, and neuromodulator in invertebrates. This receptor induces a long lasting opening of voltage- independent chloride channels, a process which seems to involve protein phosphorylation but does not require either cAPK or PKC. The rank order of potency for agonists is p-synephrine &gt; p-octopamine &gt; xylometazoline &gt; B-HT920 &gt; norepinephrine = clonidine &gt; epinephrine &gt; p-tyramine &gt; phenylephrine = oxymetazoline = mehoxamine = dopamine &gt; serotonin &gt; histamine. For antagonists, the rank order is rauwolscine = mianserin &gt; phentolamine &gt; chlorpromazine &gt; spiperone &gt; yohimbine &gt; propanolol &gt; alprenolol &gt; prazosine &gt; pindolol. The protein is Octopamine receptor 2 of Lymnaea stagnalis (Great pond snail).